Here is an 843-residue protein sequence, read N- to C-terminus: Protein piwi (843 aa).

A Nuclear localization signal motif is present at residues 1-12; sequence MADDQGRGRRRP. The disordered stretch occupies residues 1 to 76; it reads MADDQGRGRR…TERKPWGDQY (76 aa). Residues 1–257 are interaction with CBX5 and papi; it reads MADDQGRGRR…ILLGTEITHK (257 aa). A symmetric dimethylarginine mark is found at R7, R9, R10, and R11. Positions 41-72 are enriched in basic and acidic residues; that stretch reads PRADPRIEASRERRALEEAPRREGGPTERKPW. Positions 263–372 constitute a PAZ domain; it reads TIYDIMRRCS…LIPELCRVTG (110 aa). The Piwi domain maps to 538–829; it reads LILCLVPNDN…LATLVGTNLH (292 aa). Q589 lines the Mg(2+) pocket. Catalysis depends on residues D614 and D685. L843 is a Mg(2+) binding site.

The protein belongs to the argonaute family. Piwi subfamily. In terms of assembly, in the ovaries, part of a complex composed of at least Panx, nxf2, piwi and Nxt1. The complex is knowns as Panx-induced co-transcriptional silencing (PICTS) complex, Panx-nxf2-dependent TAP/p15 silencing (Pandas complex), SFiNX (silencing factor interacting nuclear export variant) or piwi-Panx-nxf2-p15 (PPNP) complex. Interacts with vas; this interaction is RNA-independent. Interacts with Dcr-1 and Fmr1; these interactions occur in polar granules. Interacts (via N-terminal region) with CBX5 (via chromoshadow domain). Forms a complex with Hsp83 and Hop; probably Hop mediates the interaction between piwi and Hsp83. Forms a complex with Yb body components armi and fs(1)Yb; this interaction is required for proper piRNA loading and nuclear localization of piwi. Interaction of Piwi and fs(1)Yb is likely to occur via armi. Interacts (via the N-terminal region when unmethylated or symmetrically methylated at Arg-10) with papi (via Tudor domain). Interacts with vret. Interacts with Panx. Interacts with arx. Interacts with Tudor-SN. Interacts with Nup358 (via N-terminus). Associates with the nuclear pore complex via interaction with Elys. Interacts with thoc5; the interaction might be partly RNA-mediated. Interacts with xmas-2. Symmetrically dimethylated, most likely by csul. Methylation at Arg-10 enhances binding to papi whereas methylation at Arg-7, Arg-9 or Arg-11 reduces binding affinity to papi. Post-translationally, phosphorylated on serine and tyrosine residues in an Hsp83-dependent manner. Expressed in ovaries (at protein level). Expressed somatically in ovariole terminal filament cells, epithelial sheath cells, cap cells and follicle cells (at protein level). Expressed in nurse cells and oocytes in developing egg chambers (at protein level). In embryos, accumulates in pole cells (at protein level). In larval and adult testis, expressed in a germinal proliferative center at the apical tip containing somatic hub cells and mitotically dividing germ stem cells (at protein level).

The protein resides in the cytoplasm. The protein localises to the nucleus. It is found in the nucleoplasm. It localises to the chromosome. In terms of biological role, acts via the piwi-interacting RNA (piRNA) metabolic process, which mediates the repression of transposable elements during meiosis by forming complexes composed of piRNAs and Piwi proteins and governs the methylation and subsequent repression of transposons. Directly binds piRNAs, a class of 24 to 30 nucleotide RNAs that are generated by a Dicer-independent mechanism and are primarily derived from transposons and other repeated sequence elements. In ovarian somatic cells, mediates silencing of transposable elements at the transcriptional level in a mael-dependent manner. Involved in silencing of long terminal repeat (LTR) retrotransposons in male germline. In testis, regulates spermatogenesis together with Tudor-SN. In germ cells, mediates silencing at both transcriptional and post-transcriptional levels and is involved in the maintenance of populations of primary and secondary piRNAs. Piwi-mediated transcriptional silencing is accompanied by the formation of His3 trimethylated on 'Lys-10' (H3K9me3) associated euchromatin and heterochromatin. In ovary, associates predominantly with antisense piRNAs that contain uridine at their 5' end. Association with sense piRNAs is also observed but to a lesser extent. Mediates a somatic signaling mechanism required for the maintenance of germline stem cells to produce and maintain a daughter germline stem cell. It is not essential for the further differentiation of the committed daughter cell. Acts cell autonomously to promote germline stem cell division. Its role in stem cell maintenance does not seem to require nuclear localization. Required maternally for the posterior localization of osk and vas and for pole cell formation during oogenesis and early embryogenesis. Together with Hop and Hsp83, mediates canalization, also known as developmental robustness, likely via epigenetic silencing of existing genetic variants and suppression of transposon-induced new genetic variation. Shows RNA cleavage activity, although is not required for any of its known functions. In the ovaries, forms a complex with nxf2, Panx and Nxt1 which acts as effectors of cotranscriptional transposon silencing. In Drosophila melanogaster (Fruit fly), this protein is Protein piwi.